A 907-amino-acid polypeptide reads, in one-letter code: Eukaryotic translation initiation factor 4 gamma 2 (907 aa).

At Met1 the chain carries N-acetylmethionine. The segment at Met1–Lys71 is disordered. Ser11 carries the phosphoserine modification. One can recognise an MIF4G domain in the interval Phe78 to His308. Thr89 carries the phosphothreonine modification. An Omega-N-methylarginine modification is found at Arg360. Ser395 is modified (phosphoserine). Lys431 is modified (N6-methyllysine). Ser443 is modified (phosphoserine). The disordered stretch occupies residues Pro498–Lys541. Positions Pro503 to Gln516 are enriched in polar residues. An Omega-N-methylarginine modification is found at Arg505. Phosphothreonine occurs at positions 508 and 514. In terms of domain architecture, MI spans Glu543–Glu666. A Glycyl lysine isopeptide (Lys-Gly) (interchain with G-Cter in SUMO2) cross-link involves residue Lys575. Residues Glu720 to Glu904 enclose the W2 domain. Phosphoserine is present on Ser902.

It belongs to the eukaryotic initiation factor 4G family. Interacts with the serine/threonine protein kinases MKNK1 and MKNK2. Binds EIF4A and EIF3. Interacts with MIF4GD. Interacts with DAZAP2. Phosphorylation; hyperphosphorylated during mitosis.

In terms of biological role, appears to play a role in the switch from cap-dependent to IRES-mediated translation during mitosis, apoptosis and viral infection. Cleaved by some caspases and viral proteases. The polypeptide is Eukaryotic translation initiation factor 4 gamma 2 (Oryctolagus cuniculus (Rabbit)).